The following is a 214-amino-acid chain: Redox-sensing transcriptional repressor Rex (214 aa).

The segment at residues 17–56 (LYYRIFKRFHADQVEKASSKQIADAMGIDSATVRRDFSYF) is a DNA-binding region (H-T-H motif). 91–96 (GCGNIG) is a binding site for NAD(+).

Belongs to the transcriptional regulatory Rex family. In terms of assembly, homodimer.

Its subcellular location is the cytoplasm. Its function is as follows. Modulates transcription in response to changes in cellular NADH/NAD(+) redox state. The protein is Redox-sensing transcriptional repressor Rex of Streptococcus pyogenes serotype M4 (strain MGAS10750).